Reading from the N-terminus, the 224-residue chain is Claudin-17 (224 aa).

Over 1-7 the chain is Cytoplasmic; the sequence is MAFYPLQ. Residues 8 to 28 form a helical membrane-spanning segment; sequence IAGLVLGFLGMVGTLATTLLP. Residues 29 to 81 lie on the Extracellular side of the membrane; that stretch reads QWRVSAFVGSNIIVFERLWEGLWMNCIRQARVRLQCKFYSSLLALPPALETAR. The helical transmembrane segment at 82–102 threads the bilayer; the sequence is ALMCVAVALSLIALLIGICGM. At 103 to 124 the chain is on the cytoplasmic side; sequence KQVQCTGSNERAKAYLLGTSGV. The helical transmembrane segment at 125 to 145 threads the bilayer; that stretch reads LFILTGIFVLIPVSWTANIII. At 146-164 the chain is on the extracellular side; that stretch reads RDFYNPAIHIGQKRELGAA. The chain crosses the membrane as a helical span at residues 165–185; it reads LFLGWASAAVLFIGGGLLCGF. The Cytoplasmic segment spans residues 186–224; sequence CCCNRKKQGYRYPVPGYRVPHTDKRRNTTMLSKTSTSYV.

This sequence belongs to the claudin family. In terms of assembly, cannot form tight junction strands on its own. Interacts with OCLN. In terms of tissue distribution, in the kidney, expressed in the proximal tubule and in the Henle's loop. In the distal convoluted tubule, not expressed in all tubules. Not detected in the collecting duct (at protein level).

It is found in the cell junction. It localises to the tight junction. The protein resides in the basolateral cell membrane. The catalysed reaction is chloride(in) = chloride(out). The enzyme catalyses hydrogencarbonate(in) = hydrogencarbonate(out). It catalyses the reaction bromide(in) = bromide(out). It carries out the reaction iodide(out) = iodide(in). The catalysed reaction is fluoride(in) = fluoride(out). The enzyme catalyses nitrate(in) = nitrate(out). It catalyses the reaction thiocyanate(in) = thiocyanate(out). In terms of biological role, channel-forming tight junction protein with selectivity for anions, including chloride and hydrogencarbonate, and for solutes smaller than 9 Angstrom in diameter. In the kidney proximal tubule, may be involved in paracellular reabsorption of filtered anions. Does not affect water permeability. The protein is Claudin-17 (CLDN17) of Homo sapiens (Human).